Consider the following 335-residue polypeptide: Glucokinase (335 aa).

An ATP-binding site is contributed by 11–16; the sequence is ADIGGT.

It belongs to the bacterial glucokinase family.

It localises to the cytoplasm. The catalysed reaction is D-glucose + ATP = D-glucose 6-phosphate + ADP + H(+). The protein is Glucokinase of Stenotrophomonas maltophilia (strain R551-3).